Here is a 968-residue protein sequence, read N- to C-terminus: RNA polymerase-associated protein RapA (968 aa).

The Helicase ATP-binding domain occupies 164–334 (DVGRRHAPRV…FARLRLLDPN (171 aa)). 177-184 (DEVGLGKT) is a binding site for ATP. The DEAH box signature appears at 280–283 (DEAH). The Helicase C-terminal domain occupies 490–662 (RVEWLMGYLT…YLASPDQTEG (173 aa)).

The protein belongs to the SNF2/RAD54 helicase family. RapA subfamily. In terms of assembly, interacts with the RNAP. Has a higher affinity for the core RNAP than for the holoenzyme. Its ATPase activity is stimulated by binding to RNAP.

Functionally, transcription regulator that activates transcription by stimulating RNA polymerase (RNAP) recycling in case of stress conditions such as supercoiled DNA or high salt concentrations. Probably acts by releasing the RNAP, when it is trapped or immobilized on tightly supercoiled DNA. Does not activate transcription on linear DNA. Probably not involved in DNA repair. This Escherichia coli O9:H4 (strain HS) protein is RNA polymerase-associated protein RapA.